The following is a 210-amino-acid chain: NAD(P)H-hydrate epimerase (210 aa).

The 200-residue stretch at 11 to 210 (AHNFDDYTIN…TVADIGIYEP (200 aa)) folds into the YjeF N-terminal domain. (6S)-NADPHX is bound at residue 60 to 64 (NNGGD). The K(+) site is built by N61 and D123. (6S)-NADPHX is bound by residues 127-133 (GVGLSRD) and D156. T159 provides a ligand contact to K(+).

This sequence belongs to the NnrE/AIBP family. K(+) serves as cofactor.

It catalyses the reaction (6R)-NADHX = (6S)-NADHX. The enzyme catalyses (6R)-NADPHX = (6S)-NADPHX. Catalyzes the epimerization of the S- and R-forms of NAD(P)HX, a damaged form of NAD(P)H that is a result of enzymatic or heat-dependent hydration. This is a prerequisite for the S-specific NAD(P)H-hydrate dehydratase to allow the repair of both epimers of NAD(P)HX. The protein is NAD(P)H-hydrate epimerase of Oenococcus oeni (strain ATCC BAA-331 / PSU-1).